The following is a 209-amino-acid chain: Orotate phosphoribosyltransferase (209 aa).

Residues Arg96, Lys100, His102, and 122–130 (EDLISTGGS) contribute to the 5-phospho-alpha-D-ribose 1-diphosphate site. An orotate-binding site is contributed by Ser126.

It belongs to the purine/pyrimidine phosphoribosyltransferase family. PyrE subfamily. Homodimer. Requires Mg(2+) as cofactor.

The catalysed reaction is orotidine 5'-phosphate + diphosphate = orotate + 5-phospho-alpha-D-ribose 1-diphosphate. It participates in pyrimidine metabolism; UMP biosynthesis via de novo pathway; UMP from orotate: step 1/2. Functionally, catalyzes the transfer of a ribosyl phosphate group from 5-phosphoribose 1-diphosphate to orotate, leading to the formation of orotidine monophosphate (OMP). In Cytophaga hutchinsonii (strain ATCC 33406 / DSM 1761 / CIP 103989 / NBRC 15051 / NCIMB 9469 / D465), this protein is Orotate phosphoribosyltransferase.